The following is a 253-amino-acid chain: Lys-63-specific deubiquitinase BRCC36 (253 aa).

Residues 9–145 (VELQTDVYMV…KEHEIFLNCF (137 aa)) enclose the MPN domain. His94, His96, and Asp107 together coordinate Zn(2+). Positions 94 to 107 (HSHPHITVCPSHVD) match the JAMM motif motif. Residues 227–249 (EKRIALNKLRATHLQRQLQELQK) adopt a coiled-coil conformation.

This sequence belongs to the peptidase M67A family. BRCC36 subfamily. In terms of assembly, component of the BRISC complex, at least composed of ABRAXAS2, BRCC3/BRCC36, BABAM2 and BABAM1/NBA1. Within the complex, interacts directly with ABRAXAS2. The heterodimer with ABRAXAS2 assembles into a heterotetramer. The BRISC complex binds polyubiquitin. Requires Zn(2+) as cofactor.

It is found in the cytoplasm. The protein resides in the nucleus. The protein localises to the cytoskeleton. It localises to the spindle pole. In terms of biological role, metalloprotease that specifically cleaves 'Lys-63'-linked polyubiquitin chains, leaving the last ubiquitin chain attached to its substrates. Catalytic subunit of the BRISC complex; does not have activity by itself, but needs to be associated into a heterotetramer with ABRAXAS2 for minimal in vitro activity. Plays a role in regulating the onset of apoptosis via its role in modulating 'Lys-63'-linked ubiquitination of target proteins. Required for normal mitotic spindle assembly and microtubule attachment to kinetochores via its role in deubiquitinating spindle assembly factors. This is Lys-63-specific deubiquitinase BRCC36 from Camponotus floridanus (Florida carpenter ant).